We begin with the raw amino-acid sequence, 100 residues long: Histone H3-like 2 (100 aa).

Positions 1–46 (MARMKHTARMSTGGKAPRKQLASKALRKAPPPPTKGVKQPTTTTSG) are disordered.

It belongs to the histone H3 family. As to quaternary structure, the nucleosome is a histone octamer containing two molecules each of H2A, H2B, H3 and H4 assembled in one H3-H4 heterotetramer and two H2A-H2B heterodimers. The octamer wraps approximately 147 bp of DNA. In terms of tissue distribution, pollen specific.

The protein localises to the nucleus. Its subcellular location is the chromosome. Its function is as follows. Core component of nucleosome. Nucleosomes wrap and compact DNA into chromatin, limiting DNA accessibility to the cellular machineries which require DNA as a template. Histones thereby play a central role in transcription regulation, DNA repair, DNA replication and chromosomal stability. DNA accessibility is regulated via a complex set of post-translational modifications of histones, also called histone code, and nucleosome remodeling. This chain is Histone H3-like 2 (gcH3), found in Lilium longiflorum (Trumpet lily).